Here is a 318-residue protein sequence, read N- to C-terminus: Acetyl-coenzyme A carboxylase carboxyl transferase subunit alpha (318 aa).

The region spanning 32–293 is the CoA carboxyltransferase C-terminal domain; the sequence is NINEEIQRLE…REALREEWAR (262 aa).

It belongs to the AccA family. As to quaternary structure, acetyl-CoA carboxylase is a heterohexamer composed of biotin carboxyl carrier protein (AccB), biotin carboxylase (AccC) and two subunits each of ACCase subunit alpha (AccA) and ACCase subunit beta (AccD).

It localises to the cytoplasm. The catalysed reaction is N(6)-carboxybiotinyl-L-lysyl-[protein] + acetyl-CoA = N(6)-biotinyl-L-lysyl-[protein] + malonyl-CoA. It functions in the pathway lipid metabolism; malonyl-CoA biosynthesis; malonyl-CoA from acetyl-CoA: step 1/1. In terms of biological role, component of the acetyl coenzyme A carboxylase (ACC) complex. First, biotin carboxylase catalyzes the carboxylation of biotin on its carrier protein (BCCP) and then the CO(2) group is transferred by the carboxyltransferase to acetyl-CoA to form malonyl-CoA. The sequence is that of Acetyl-coenzyme A carboxylase carboxyl transferase subunit alpha from Halorhodospira halophila (strain DSM 244 / SL1) (Ectothiorhodospira halophila (strain DSM 244 / SL1)).